Here is a 155-residue protein sequence, read N- to C-terminus: MRFISIFLIIVALCVSSSWAFNFTDQPNSFRISGTGCGSGTTTVYFSTDGRCNSACGGSIRIKGEGNNVPNQQFTLNDYSKNVTNCSGTSNVASFRCPALVNTTSPTFTVNVGNSAYHVTCQYAQVTETPAGNSADKVAVGIAIIFGALISLLAL.

A signal peptide spans 1-20; that stretch reads MRFISIFLIIVALCVSSSWA. Residues Asn-22, Asn-82, Asn-85, and Asn-102 are each glycosylated (N-linked (GlcNAc...) asparagine). Ser-105 is a glycosylation site (O-linked (GlcNAc) serine). Residue Asn-133 is the site of GPI-like-anchor amidated asparagine attachment. Residues 134-155 constitute a propeptide, removed in mature form; it reads SADKVAVGIAIIFGALISLLAL.

The GPI-like-anchor contains a phosphoceramide group, rather than a phosphatidyl group.

Its subcellular location is the cell membrane. This is Prespore-specific protein E (pspE) from Dictyostelium discoideum (Social amoeba).